Here is a 291-residue protein sequence, read N- to C-terminus: uncharacterized protein (291 aa).

This is an uncharacterized protein from Haemophilus influenzae (strain ATCC 51907 / DSM 11121 / KW20 / Rd).